The sequence spans 1704 residues: Villidin (1704 aa).

4 WD repeats span residues Gly82–Asp122, Lys133–Ser173, Gly180–Gln221, and Thr225–Pro271. 2 disordered regions span residues Ile439–Phe460 and Ser606–Thr721. The span at Ser442–Gly456 shows a compositional bias: gly residues. The 105-residue stretch at Pro459–Glu563 folds into the PH 1 domain. 3 stretches are compositionally biased toward low complexity: residues Gln613–Gln636, Ser651–Ser701, and Asn709–Thr721. 2 PH domains span residues Asp727–Lys828 and Glu871–Lys969. Residues Leu848–Gln877 are disordered. Residues Ser854–Pro873 are compositionally biased toward acidic residues. Gelsolin-like repeat units lie at residues Lys1025–Asn1119, Ile1138–Tyr1241, Gly1293–Lys1390, Lys1404–Thr1494, and Arg1520–Trp1615. One can recognise an HP domain in the interval Asp1641 to Phe1704.

It localises to the membrane. Its subcellular location is the cytoplasm. The protein localises to the cytoskeleton. In terms of biological role, may function as a linker between membranes and the actin cytoskeleton. The chain is Villidin (vilA) from Dictyostelium discoideum (Social amoeba).